The sequence spans 102 residues: Scorpine-like-2 (102 aa).

Positions 1–19 (MQTQCTVLQLLVLVALCSC) are cleaved as a signal peptide. The region spanning 63 to 102 (QQLCLIVDTVQWCNKSCLAAENKEGYCHGTKCKCGIKVSY) is the BetaSPN-type CS-alpha/beta domain. 3 cysteine pairs are disulfide-bonded: Cys66-Cys89, Cys75-Cys94, and Cys79-Cys96.

Belongs to the long chain scorpion toxin family. Class 3 subfamily. As to expression, expressed by the venom gland.

The protein resides in the secreted. In terms of biological role, inhibits voltage-gated potassium channels. The sequence is that of Scorpine-like-2 from Urodacus yaschenkoi (Inland robust scorpion).